The sequence spans 357 residues: Probable protein phosphatase 2C 60 (357 aa).

The PPM-type phosphatase domain maps to 23–329 (RYGLSSMQGW…DNMTMILVRF (307 aa)). Mn(2+) is bound by residues D57, G58, D272, and D320. Positions 331 to 357 (NPTPSETELKPEASQAEGNHDEPSSSN) are disordered. Over residues 348–357 (GNHDEPSSSN) the composition is skewed to basic and acidic residues.

It belongs to the PP2C family. Mg(2+) is required as a cofactor. The cofactor is Mn(2+).

The catalysed reaction is O-phospho-L-seryl-[protein] + H2O = L-seryl-[protein] + phosphate. It catalyses the reaction O-phospho-L-threonyl-[protein] + H2O = L-threonyl-[protein] + phosphate. The protein is Probable protein phosphatase 2C 60 of Arabidopsis thaliana (Mouse-ear cress).